The sequence spans 271 residues: ATP synthase subunit a (271 aa).

A run of 5 helical transmembrane segments spans residues 40 to 60 (TINIDSMFFSVVLGLLFLVLF), 100 to 120 (LIAPLALTIFVWVFLMNLMDL), 146 to 166 (DVNVTLSMALGVFILILFYSI), 220 to 240 (LIFILIAGLLPWWSQWILNVP), and 242 to 262 (AIFHILIITLQAFIFMVLTIV).

Belongs to the ATPase A chain family. As to quaternary structure, F-type ATPases have 2 components, CF(1) - the catalytic core - and CF(0) - the membrane proton channel. CF(1) has five subunits: alpha(3), beta(3), gamma(1), delta(1), epsilon(1). CF(0) has three main subunits: a(1), b(2) and c(9-12). The alpha and beta chains form an alternating ring which encloses part of the gamma chain. CF(1) is attached to CF(0) by a central stalk formed by the gamma and epsilon chains, while a peripheral stalk is formed by the delta and b chains.

The protein localises to the cell inner membrane. Its function is as follows. Key component of the proton channel; it plays a direct role in the translocation of protons across the membrane. This chain is ATP synthase subunit a, found in Escherichia coli O8 (strain IAI1).